Reading from the N-terminus, the 828-residue chain is Periplasmic nitrate reductase (828 aa).

Positions 1–31 form a signal peptide, tat-type signal; that stretch reads MKLSRRSFMKANAVAAAAAAAGLSVPGVARA. The 57-residue stretch at 39-95 folds into the 4Fe-4S Mo/W bis-MGD-type domain; that stretch reads IKWDKAPCRFCGTGCGVLVGTQQGRIVACQGDPDAPVNRGLNCIKGYFLPKIMYGKD. [4Fe-4S] cluster contacts are provided by Cys-46, Cys-49, Cys-53, and Cys-81. Residues Lys-83, Gln-150, Asn-175, Cys-179, 212–219, 243–247, 262–264, Met-372, Gln-376, Asn-482, 508–509, Lys-531, Asp-558, and 718–727 contribute to the Mo-bis(molybdopterin guanine dinucleotide) site; these read WGSNMAEM, STFQH, QSD, SD, and TGRVLEHWHT. Phe-794 is a substrate binding site. Mo-bis(molybdopterin guanine dinucleotide) is bound by residues Asn-802 and Lys-819.

This sequence belongs to the prokaryotic molybdopterin-containing oxidoreductase family. NasA/NapA/NarB subfamily. Component of the periplasmic nitrate reductase NapAB complex composed of NapA and NapB. [4Fe-4S] cluster serves as cofactor. Mo-bis(molybdopterin guanine dinucleotide) is required as a cofactor. Predicted to be exported by the Tat system. The position of the signal peptide cleavage has not been experimentally proven.

Its subcellular location is the periplasm. It carries out the reaction 2 Fe(II)-[cytochrome] + nitrate + 2 H(+) = 2 Fe(III)-[cytochrome] + nitrite + H2O. Its function is as follows. Catalytic subunit of the periplasmic nitrate reductase complex NapAB. Receives electrons from NapB and catalyzes the reduction of nitrate to nitrite. The chain is Periplasmic nitrate reductase from Citrobacter koseri (strain ATCC BAA-895 / CDC 4225-83 / SGSC4696).